The primary structure comprises 864 residues: Structure-specific endonuclease subunit SLX4 (864 aa).

Residues Ser35 to Ser54 show a composition bias toward low complexity. Disordered regions lie at residues Ser35 to Val72, Val89 to Ala113, Lys160 to Asp193, Gly288 to Lys318, Leu348 to Asn382, Ala413 to Asn432, and Lys625 to Pro771. Positions Ala58–Val72 are enriched in basic and acidic residues. 2 stretches are compositionally biased toward polar residues: residues Lys160 to Pro169 and Leu289 to Ser306. Residues Lys307–Pro317 show a composition bias toward basic residues. Residues Ser659–Val668 show a composition bias toward polar residues. The segment covering Val683–Lys695 has biased composition (low complexity). Polar residues predominate over residues Pro743–Pro771.

It belongs to the SLX4 family. As to quaternary structure, forms a heterodimer with SLX1. Phosphorylated in response to DNA damage.

Its subcellular location is the nucleus. Its function is as follows. Regulatory subunit of the SLX1-SLX4 structure-specific endonuclease that resolves DNA secondary structures generated during DNA repair and recombination. Has endonuclease activity towards branched DNA substrates, introducing single-strand cuts in duplex DNA close to junctions with ss-DNA. In Paracoccidioides brasiliensis (strain Pb03), this protein is Structure-specific endonuclease subunit SLX4.